Consider the following 611-residue polypeptide: Lanthanide-dependent methanol dehydrogenase (611 aa).

Positions 1 to 34 (MTVKLKKPKKYAVAKNATLLAAFGLIGSLSLAKA) are cleaved as a signal peptide. Residues C138 and C139 are joined by a disulfide bond. Pyrroloquinoline quinone-binding residues include R144, T188, S203, G204, and G205. A Ce(3+)-binding site is contributed by E206. A Eu(3+)-binding site is contributed by E206. The pyrroloquinoline quinone site is built by T270 and W272. Ce(3+)-binding residues include N290, D333, and D335. 3 residues coordinate Eu(3+): N290, D333, and D335. Residue R360 participates in pyrroloquinoline quinone binding. C414 and C443 are oxidised to a cystine. Pyrroloquinoline quinone-binding residues include W501 and W566.

Belongs to the bacterial PQQ dehydrogenase family. Homodimer. Requires Ce(3+) as cofactor. La(3+) is required as a cofactor. It depends on Nd(3+) as a cofactor. Pr(3+) serves as cofactor. The cofactor is Eu(3+). Requires pyrroloquinoline quinone as cofactor.

It is found in the periplasm. The catalysed reaction is 2 Fe(III)-[cytochrome cL] + methanol = 2 Fe(II)-[cytochrome cL] + formaldehyde + 2 H(+). It carries out the reaction 4 Fe(III)-[cytochrome cL] + methanol + H2O = 4 Fe(II)-[cytochrome cL] + formate + 5 H(+). It catalyses the reaction 2 Fe(III)-[cytochrome cL] + a primary alcohol = 2 Fe(II)-[cytochrome cL] + an aldehyde + 2 H(+). It participates in one-carbon metabolism; methanol degradation. Functionally, catalyzes the oxidation of methanol to formaldehyde or formate in the presence of lanthanides (Ln). Is a key enzyme in methane/methanol metabolism, allowing M.fumariolicum to grow on methane as the sole carbon and energy source. Can also act on other primary alcohols in vitro, such as ethanol, 1-propanol, 1-butanol, and 1-hexanol, but is not able to oxidize secondary alcohols and acetaldehyde. Uses a specific cytochrome cL, encoded by the adjacent gene in the locus, as electron acceptor. This Methylacidiphilum fumariolicum (strain SolV) protein is Lanthanide-dependent methanol dehydrogenase.